A 147-amino-acid polypeptide reads, in one-letter code: HTH-type transcriptional regulator MntR (147 aa).

Residues 1 to 63 enclose the HTH dtxR-type domain; that stretch reads MPTPSMEDYI…YEKYRGFVLT (63 aa). Mn(2+) contacts are provided by aspartate 8, glutamate 11, histidine 77, glutamate 99, glutamate 102, and histidine 103.

This sequence belongs to the DtxR/MntR family. In terms of assembly, homodimer.

It is found in the cytoplasm. DNA binding is strongly activated by Mn(2+). Its function is as follows. Central regulator of manganese homeostasis. The chain is HTH-type transcriptional regulator MntR from Oceanobacillus iheyensis (strain DSM 14371 / CIP 107618 / JCM 11309 / KCTC 3954 / HTE831).